The following is a 412-amino-acid chain: Short-chain specific acyl-CoA dehydrogenase, mitochondrial (412 aa).

A mitochondrion-targeting transit peptide spans Met1 to Arg24. The residue at position 27 (Thr27) is a Phosphothreonine. Residue Lys51 is modified to N6-acetyllysine; alternate. Residue Lys51 is modified to N6-succinyllysine; alternate. Lys72 is modified (N6-acetyllysine). The residue at position 129 (Lys129) is an N6-acetyllysine; alternate. Lys129 carries the N6-succinyllysine; alternate modification. FAD contacts are provided by residues Phe152–Ser161 and Trp185–Thr187. A substrate-binding site is contributed by Ser161. The residue at position 208 (Lys208) is an N6-acetyllysine. An N6-acetyllysine; alternate modification is found at Lys262. Lys262 carries the post-translational modification N6-succinyllysine; alternate. Residue Asp269–Arg272 participates in substrate binding. Arg297 lines the FAD pocket. At Lys306 the chain carries N6-acetyllysine; alternate. Position 306 is an N6-succinyllysine; alternate (Lys306). Residues Gln308 and Gln365–Gly369 each bind FAD. The active-site Proton acceptor is the Glu392. Residue Gly393 coordinates substrate. Position 394 to 396 (Thr394 to Glu396) interacts with FAD.

This sequence belongs to the acyl-CoA dehydrogenase family. As to quaternary structure, homotetramer. The cofactor is FAD.

Its subcellular location is the mitochondrion matrix. The enzyme catalyses a short-chain 2,3-saturated fatty acyl-CoA + oxidized [electron-transfer flavoprotein] + H(+) = a short-chain (2E)-enoyl-CoA + reduced [electron-transfer flavoprotein]. The catalysed reaction is butanoyl-CoA + oxidized [electron-transfer flavoprotein] + H(+) = (2E)-butenoyl-CoA + reduced [electron-transfer flavoprotein]. It carries out the reaction pentanoyl-CoA + oxidized [electron-transfer flavoprotein] + H(+) = (2E)-pentenoyl-CoA + reduced [electron-transfer flavoprotein]. It catalyses the reaction hexanoyl-CoA + oxidized [electron-transfer flavoprotein] + H(+) = (2E)-hexenoyl-CoA + reduced [electron-transfer flavoprotein]. It participates in lipid metabolism; mitochondrial fatty acid beta-oxidation. Short-chain specific acyl-CoA dehydrogenase is one of the acyl-CoA dehydrogenases that catalyze the first step of mitochondrial fatty acid beta-oxidation, an aerobic process breaking down fatty acids into acetyl-CoA and allowing the production of energy from fats. The first step of fatty acid beta-oxidation consists in the removal of one hydrogen from C-2 and C-3 of the straight-chain fatty acyl-CoA thioester, resulting in the formation of trans-2-enoyl-CoA. Among the different mitochondrial acyl-CoA dehydrogenases, short-chain specific acyl-CoA dehydrogenase acts specifically on acyl-CoAs with saturated 4 to 6 carbons long primary chains. This chain is Short-chain specific acyl-CoA dehydrogenase, mitochondrial (ACADS), found in Bos taurus (Bovine).